A 352-amino-acid chain; its full sequence is Selenide, water dikinase (352 aa).

Cys-23 is a catalytic residue. ATP-binding positions include Lys-26 and Ser-54 to Asp-56. Asp-57 is a binding site for Mg(2+). Residues Asp-74, Asp-97, and Gly-145–Ser-147 each bind ATP. Position 97 (Asp-97) interacts with Mg(2+). Residue Asp-233 coordinates Mg(2+).

This sequence belongs to the selenophosphate synthase 1 family. Class I subfamily. In terms of assembly, homodimer. It depends on Mg(2+) as a cofactor.

It carries out the reaction hydrogenselenide + ATP + H2O = selenophosphate + AMP + phosphate + 2 H(+). Synthesizes selenophosphate from selenide and ATP. This Shewanella sp. (strain MR-4) protein is Selenide, water dikinase.